A 230-amino-acid chain; its full sequence is Urease accessory protein UreF (230 aa).

Belongs to the UreF family. UreD, UreF and UreG form a complex that acts as a GTP-hydrolysis-dependent molecular chaperone, activating the urease apoprotein by helping to assemble the nickel containing metallocenter of UreC. The UreE protein probably delivers the nickel.

It localises to the cytoplasm. Required for maturation of urease via the functional incorporation of the urease nickel metallocenter. The protein is Urease accessory protein UreF of Cupriavidus pinatubonensis (strain JMP 134 / LMG 1197) (Cupriavidus necator (strain JMP 134)).